We begin with the raw amino-acid sequence, 450 residues long: Transcription factor SCREAM2 (450 aa).

Disordered regions lie at residues 1–47 (MNSD…NQND), 207–231 (RQSS…YERE), and 244–265 (GLNY…KGMP). The segment covering 209 to 220 (SSSSKMCNSESS) has biased composition (low complexity). Residues 221–230 (SEMRKSSYER) are compositionally biased toward basic and acidic residues. In terms of domain architecture, bHLH spans 263–312 (GMPAKNLMAERRRRKKLNDRLYMLRSVVPKISKMDRASILGDAIDYLKEL). The 73-residue stretch at 378–450 (NIHMFCGRRP…LDTAGYAGLV (73 aa)) folds into the ACT domain.

As to quaternary structure, homodimer. Heterodimers with SPCH, MUTE, and FAMA. Expressed constitutively in roots, leaves, stems, and flowers. Broad expression within stomatal cell lineages of leaf epidermis, except in mature guard-cells.

The protein resides in the nucleus. In terms of biological role, mediates stomatal differentiation in the epidermis probably by controlling successive roles of SPCH, MUTE, and FAMA. Functions as a dimer with SPCH during stomatal initiation. This chain is Transcription factor SCREAM2 (SCRM2), found in Arabidopsis thaliana (Mouse-ear cress).